The chain runs to 388 residues: Processive diacylglycerol beta-glucosyltransferase (388 aa).

It belongs to the glycosyltransferase 28 family. UgtP subfamily.

It localises to the cell membrane. It carries out the reaction a 1,2-diacyl-3-O-(beta-D-glucopyranosyl)-sn-glycerol + UDP-alpha-D-glucose = a 1,2-diacyl-3-O-(beta-D-Glc-(1-&gt;6)-beta-D-Glc)-sn-glycerol + UDP + H(+). It catalyses the reaction a 1,2-diacyl-3-O-(beta-D-Glc-(1-&gt;6)-beta-D-Glc)-sn-glycerol + UDP-alpha-D-glucose = a 1,2-diacyl-3-O-(beta-D-Glc-(1-&gt;6)-beta-D-Glc-(1-&gt;6)-beta-D-Glc)-sn-glycerol + UDP + H(+). The enzyme catalyses a 1,2-diacyl-sn-glycerol + UDP-alpha-D-glucose = a 1,2-diacyl-3-O-(beta-D-glucopyranosyl)-sn-glycerol + UDP + H(+). It participates in glycolipid metabolism; diglucosyl-diacylglycerol biosynthesis. Its function is as follows. Processive glucosyltransferase involved in the biosynthesis of both the bilayer- and non-bilayer-forming membrane glucolipids. Is able to successively transfer up to three glucosyl residues to diacylglycerol (DAG), thereby catalyzing the formation of beta-monoglucosyl-DAG (3-O-(beta-D-glucopyranosyl)-1,2-diacyl-sn-glycerol), beta-diglucosyl-DAG (3-O-(beta-D-glucopyranosyl-beta-(1-&gt;6)-D-glucopyranosyl)-1,2-diacyl-sn-glycerol) and beta-triglucosyl-DAG (3-O-(beta-D-glucopyranosyl-beta-(1-&gt;6)-D-glucopyranosyl-beta-(1-&gt;6)-D-glucopyranosyl)-1,2-diacyl-sn-glycerol). Beta-diglucosyl-DAG is the predominant glycolipid found in Bacillales and is also used as a membrane anchor for lipoteichoic acid (LTA). The sequence is that of Processive diacylglycerol beta-glucosyltransferase from Bacillus cereus (strain G9842).